Here is a 326-residue protein sequence, read N- to C-terminus: N-acetyl-gamma-glutamyl-phosphate reductase (326 aa).

The active site involves cysteine 155.

Belongs to the NAGSA dehydrogenase family. Type 1 subfamily.

It is found in the cytoplasm. It carries out the reaction N-acetyl-L-glutamate 5-semialdehyde + phosphate + NADP(+) = N-acetyl-L-glutamyl 5-phosphate + NADPH + H(+). It functions in the pathway amino-acid biosynthesis; L-arginine biosynthesis; N(2)-acetyl-L-ornithine from L-glutamate: step 3/4. Functionally, catalyzes the NADPH-dependent reduction of N-acetyl-5-glutamyl phosphate to yield N-acetyl-L-glutamate 5-semialdehyde. This chain is N-acetyl-gamma-glutamyl-phosphate reductase, found in Shewanella loihica (strain ATCC BAA-1088 / PV-4).